The following is a 139-amino-acid chain: Arsenate reductase (139 aa).

Catalysis depends on nucleophile residues C10, C82, and C89. Intrachain disulfides connect C10–C82 and C82–C89.

Belongs to the low molecular weight phosphotyrosine protein phosphatase family. Thioredoxin-coupled ArsC subfamily.

The protein resides in the cytoplasm. It catalyses the reaction arsenate + [thioredoxin]-dithiol + H(+) = arsenite + [thioredoxin]-disulfide + H2O. Functionally, catalyzes the reduction of arsenate [As(V)] to arsenite [As(III)]. In Shouchella clausii (strain KSM-K16) (Alkalihalobacillus clausii), this protein is Arsenate reductase.